The primary structure comprises 328 residues: Purple acid phosphatase 7 (328 aa).

Residues Met-1–Ser-24 form the signal peptide. A Fe cation-binding site is contributed by Asp-48. N-linked (GlcNAc...) asparagine glycosylation is present at Asn-56. Positions 81 and 84 each coordinate Fe cation. Residue Asp-81 participates in Zn(2+) binding. Zn(2+)-binding residues include Asn-119 and His-213. The active-site Proton donor is His-222. Residue His-248 coordinates Zn(2+). Substrate is bound at residue His-248 to His-250. Residue His-250 participates in Fe cation binding.

Belongs to the metallophosphoesterase superfamily. Purple acid phosphatase family. Homodimer. Requires Fe cation as cofactor. The cofactor is Zn(2+). As to expression, expressed in roots, stems, leaves, flowers and siliques.

The protein resides in the secreted. It carries out the reaction a phosphate monoester + H2O = an alcohol + phosphate. The chain is Purple acid phosphatase 7 (PAP7) from Arabidopsis thaliana (Mouse-ear cress).